A 201-amino-acid polypeptide reads, in one-letter code: NADH-quinone oxidoreductase subunit B 1 (201 aa).

Positions 80, 81, 145, and 175 each coordinate [4Fe-4S] cluster.

This sequence belongs to the complex I 20 kDa subunit family. As to quaternary structure, NDH-1 is composed of 14 different subunits. Subunits NuoB, C, D, E, F, and G constitute the peripheral sector of the complex. [4Fe-4S] cluster serves as cofactor.

Its subcellular location is the cell inner membrane. The catalysed reaction is a quinone + NADH + 5 H(+)(in) = a quinol + NAD(+) + 4 H(+)(out). Functionally, NDH-1 shuttles electrons from NADH, via FMN and iron-sulfur (Fe-S) centers, to quinones in the respiratory chain. The immediate electron acceptor for the enzyme in this species is believed to be ubiquinone. Couples the redox reaction to proton translocation (for every two electrons transferred, four hydrogen ions are translocated across the cytoplasmic membrane), and thus conserves the redox energy in a proton gradient. The polypeptide is NADH-quinone oxidoreductase subunit B 1 (Rhodopseudomonas palustris (strain BisB18)).